The primary structure comprises 188 residues: MGLKADSWIKKMSLEHGMINPFCEKQVGKNVISYGLSSYGYDIRVGSEFMLFDNKNALIDPKNFDPNNATKIDASKEGFFILPANAFALAHTIEYFKMPKDTLAICLGKSTYARCGIIVNVTPFEPEFEGYITIEISNTTNLPAKVYANEGIAQVVFLQGDEVCEQSYKDRGGKYQGQVGITLPKILK.

109 to 114 (KSTYAR) is a dCTP binding site. Catalysis depends on glutamate 135, which acts as the Proton donor/acceptor. Residues glutamine 154, tyrosine 168, and glutamine 178 each contribute to the dCTP site.

It belongs to the dCTP deaminase family. As to quaternary structure, homotrimer.

It catalyses the reaction dCTP + H2O + H(+) = dUTP + NH4(+). Its pathway is pyrimidine metabolism; dUMP biosynthesis; dUMP from dCTP (dUTP route): step 1/2. Its function is as follows. Catalyzes the deamination of dCTP to dUTP. This is dCTP deaminase from Helicobacter pylori (strain J99 / ATCC 700824) (Campylobacter pylori J99).